The sequence spans 270 residues: 5-amino-6-(5-phospho-D-ribitylamino)uracil phosphatase YitU (270 aa).

Aspartate 11 (nucleophile) is an active-site residue. Residue aspartate 11 participates in Mg(2+) binding. A phosphate-binding site is contributed by leucine 12. Aspartate 13 is a Mg(2+) binding site. Phosphate-binding positions include 45–46 (TG) and lysine 197. Aspartate 220 lines the Mg(2+) pocket. A phosphate-binding site is contributed by asparagine 223.

Belongs to the HAD-like hydrolase superfamily. Cof family. It depends on Mg(2+) as a cofactor.

The enzyme catalyses 5-amino-6-(5-phospho-D-ribitylamino)uracil + H2O = 5-amino-6-(D-ribitylamino)uracil + phosphate. It participates in cofactor biosynthesis; riboflavin biosynthesis; 5-amino-6-(D-ribitylamino)uracil from GTP: step 4/4. Catalyzes the dephosphorylation of the riboflavin precursor 5-amino-6-(5-phospho-D-ribitylamino)uracil and of flavin mononucleotide (FMN) in vitro. In Bacillus subtilis (strain 168), this protein is 5-amino-6-(5-phospho-D-ribitylamino)uracil phosphatase YitU (yitU).